The primary structure comprises 440 residues: Proline--tRNA ligase (440 aa).

It belongs to the class-II aminoacyl-tRNA synthetase family. ProS type 2 subfamily. As to quaternary structure, homodimer.

The protein resides in the cytoplasm. It catalyses the reaction tRNA(Pro) + L-proline + ATP = L-prolyl-tRNA(Pro) + AMP + diphosphate. In terms of biological role, catalyzes the attachment of proline to tRNA(Pro) in a two-step reaction: proline is first activated by ATP to form Pro-AMP and then transferred to the acceptor end of tRNA(Pro). The sequence is that of Proline--tRNA ligase from Agrobacterium fabrum (strain C58 / ATCC 33970) (Agrobacterium tumefaciens (strain C58)).